The primary structure comprises 379 residues: Sialidase-2 (379 aa).

The FRIP motif signature appears at 20 to 23 (YRIP). Positions 21 and 41 each coordinate substrate. Catalysis depends on D46, which acts as the Proton acceptor. One copy of the BNR 1 repeat lies at 127–138 (VSSTDHGRTWSP). Substrate-binding residues include Y179 and Y181. The BNR 2 repeat unit spans residues 197–208 (FISLDHGHTWKL). Residues E218, R237, and R303 each contribute to the substrate site. The active site involves R303. Y333 (nucleophile) is an active-site residue. Residue E354 is part of the active site.

The protein belongs to the glycosyl hydrolase 33 family. In terms of tissue distribution, highly expressed in heart.

It localises to the cytoplasm. The protein localises to the cytosol. The catalysed reaction is Hydrolysis of alpha-(2-&gt;3)-, alpha-(2-&gt;6)-, alpha-(2-&gt;8)- glycosidic linkages of terminal sialic acid residues in oligosaccharides, glycoproteins, glycolipids, colominic acid and synthetic substrates.. It carries out the reaction a ganglioside GD1a + H2O = a ganglioside GM1 + N-acetylneuraminate. It catalyses the reaction a ganglioside GM1 + H2O = a ganglioside GA1 + N-acetylneuraminate. The enzyme catalyses a ganglioside GT1b + H2O = a ganglioside GD1b + N-acetylneuraminate. The catalysed reaction is a ganglioside GD1b + H2O = a ganglioside GM1 + N-acetylneuraminate. It carries out the reaction a ganglioside GD3 + H2O = a ganglioside GM3 + N-acetylneuraminate. It catalyses the reaction a ganglioside GM3 + H2O = a beta-D-galactosyl-(1-&gt;4)-beta-D-glucosyl-(1&lt;-&gt;1)-ceramide + N-acetylneuraminate. The enzyme catalyses a ganglioside GM2 + H2O = a ganglioside GA2 + N-acetylneuraminate. The catalysed reaction is a neolactoside IV(3)-alpha-NeuAc-nLc4Cer(d18:1(4E)) + H2O = a neolactoside nLc4Cer(d18:1(4E)) + N-acetylneuraminate. It carries out the reaction N-acetyl-alpha-neuraminosyl-(2-&gt;3)-beta-D-galactosyl-(1-&gt;4)-D-glucose + H2O = lactose + N-acetylneuraminate. Exo-alpha-sialidase that catalyzes the hydrolytic cleavage of the terminal sialic acid (N-acetylneuraminic acid, Neu5Ac) of a glycan moiety in the catabolism of glycolipids, glycoproteins and oligosacharides. Recognizes sialyl linkage positions of the glycan moiety as well as the supramolecular organization of the sialoglycoconjugate. Displays preference for alpha-(2-&gt;3)-sialylated GD1a and GT1B gangliosides over alpha-(2-&gt;8)-sialylated GD1b, in both monomeric forms and micelles. Hydrolyzes exclusively monomeric GM1 ganglioside, but has no activity toward the miscellar form. Has lower sialidase activity for glycoproteins such as fetuin and TF/transferrin that carry a mixture of alpha-(2-&gt;3) and alpha-(2-&gt;6)-sialyl linkages. Cleaves milk oligosaccharide alpha-(2-&gt;3)-sialyllactose, but is inactive toward isomer alpha-(2-&gt;6)-sialyllactose isomer. Has no activity toward colominic acid, a homomer of alpha-(2-&gt;8)-linked Neu5Ac residues. The polypeptide is Sialidase-2 (Neu2) (Mus musculus (Mouse)).